Reading from the N-terminus, the 86-residue chain is BaSO(4)-adsorbing protein 1 (86 aa).

Intrachain disulfides connect Cys6–Cys22, Cys18–Cys49, and Cys39–Cys54. Positions 58–86 (GDSASNTQNQGGSRRQENEDQGDDEWDRK) are disordered. Residues 59–70 (DSASNTQNQGGS) are compositionally biased toward polar residues. Over residues 76–86 (EDQGDDEWDRK) the composition is skewed to acidic residues.

In terms of tissue distribution, salivary gland (at protein level).

Its subcellular location is the secreted. Functionally, inhibits lectin and classical pathways of complement system activation in the host with no significant effect on the alternative pathway. Inhibits host extrinsic blood coagulation pathway but not the intrinsic cascade. Binds to neutral and negatively charged membranes in vitro; binding is reduced upon pre-incubation with Ca(2+). The sequence is that of BaSO(4)-adsorbing protein 1 from Ornithodoros savignyi (African eyed tampan).